The chain runs to 41 residues: Plantazolicin (41 aa).

The propeptide occupies Met1–Ala27. N2,N2-dimethylarginine is present on Arg28. A cross-link (thiazole-4-carboxylic acid (Arg-Cys)) is located at residues Arg28 to Cys29. 2 consecutive cross-links (5-methyloxazole-4-carboxylic acid (Cys-Thr)) follow at residues Cys29–Thr30 and Cys31–Thr32. The segment at residues Thr30–Cys31 is a cross-link (thiazole-4-carboxylic acid (Thr-Cys)). Positions Thr32–Thr33 form a cross-link, 5-methyloxazole-4-carboxylic acid (Thr-Thr). Residues Ile35 to Ser36 constitute a cross-link (oxazole-4-carboxylic acid (Ile-Ser)). 3 cross-links (oxazole-4-carboxylic acid (Ser-Ser)) span residues Ser36–Ser37, Ser37–Ser38, and Ser38–Ser39. Residues Ser39–Thr40 constitute a cross-link (5-methyloxazoline-4-carboxylic acid (Ser-Thr)).

In terms of processing, maturation of thiazole and oxazole containing antibiotics involves the enzymatic condensation of a Cys, Ser or Thr with the alpha-carbonyl of the preceding amino acid to form a thioether or ether bond, then dehydration to form a double bond with the alpha-amino nitrogen. Thiazoline or oxazoline ring are dehydrogenated to form thiazole or oxazole rings. 2 forms exist: plantazolicin A and plantazolicin B. The structural difference between them is a dimethylation at Arg-28 in plantazolicin A.

The protein resides in the secreted. The protein localises to the cell wall. In terms of biological role, peptide antibiotic inhibiting growth of Gram-positive bacteria in the dimethylated form plantazolicin A. The desmethyl form plantazolicin B has no antibiotic activity. The mode of action appears to be disruption of cell walls and lysis of cells. Inhibits B.subtilis strain HB0042, B.megaterium strain 7A1 and B.anthracis (MIC=2-4 ug/ml). Weakly inhibits Gram-positive bacteria B.brevis strain ATCC 8246, B.subtilis strain 168, B.cereus strain ATCC 14579 and strain CU1065, B.licheniformis strain ATCC 9789, M.luteus, B.sphaericus, P.granivorans and S.pyogenes (MIC=128 ug/ml). Does not inhibit B.pumilus, P.polymyxa, Arthrobacter sp., S.aureus, vancomycin-resistant E.faecalis, L.monocytogenes, methicillin-resistant S.aureus or Gram-negative bacteria E.coli strain K12, K.terrigena, Pseudomonas sp. and E.carotovora. The polypeptide is Plantazolicin (Bacillus velezensis (strain DSM 23117 / BGSC 10A6 / LMG 26770 / FZB42) (Bacillus amyloliquefaciens subsp. plantarum)).